The chain runs to 269 residues: tRNA uridine(34) hydroxylase (269 aa).

The 94-residue stretch at 121–214 (SQPDVLVIDT…YLERTHNKNG (94 aa)) folds into the Rhodanese domain. Catalysis depends on C174, which acts as the Cysteine persulfide intermediate.

This sequence belongs to the TrhO family.

The enzyme catalyses uridine(34) in tRNA + AH2 + O2 = 5-hydroxyuridine(34) in tRNA + A + H2O. Catalyzes oxygen-dependent 5-hydroxyuridine (ho5U) modification at position 34 in tRNAs. In Wolbachia sp. subsp. Brugia malayi (strain TRS), this protein is tRNA uridine(34) hydroxylase.